We begin with the raw amino-acid sequence, 283 residues long: Pantothenate synthetase 2 (283 aa).

34 to 41 (MGALHDGH) is an ATP binding site. Catalysis depends on His-41, which acts as the Proton donor. Position 65 (Gln-65) interacts with (R)-pantoate. Gln-65 contacts beta-alanine. 152 to 155 (GEKD) serves as a coordination point for ATP. Gln-158 is a binding site for (R)-pantoate. Residues Val-181 and 189 to 192 (MSSR) contribute to the ATP site.

The protein belongs to the pantothenate synthetase family. In terms of assembly, homodimer.

It localises to the cytoplasm. It catalyses the reaction (R)-pantoate + beta-alanine + ATP = (R)-pantothenate + AMP + diphosphate + H(+). It participates in cofactor biosynthesis; (R)-pantothenate biosynthesis; (R)-pantothenate from (R)-pantoate and beta-alanine: step 1/1. Its function is as follows. Catalyzes the condensation of pantoate with beta-alanine in an ATP-dependent reaction via a pantoyl-adenylate intermediate. This Bradyrhizobium diazoefficiens (strain JCM 10833 / BCRC 13528 / IAM 13628 / NBRC 14792 / USDA 110) protein is Pantothenate synthetase 2.